The primary structure comprises 203 residues: MADPARARKLAVRIREVVASALERGVKDPRLGMVTVTEVRVTPDLVDATVFYTVYGDEDARRASAEALESARGLLRSQVGRATGVKVTPTLTFVHDRLPDDAKHLEDLISVARERDARLAEVRRDARPAGDEDPYRRPRTVDEDDEDEDEDLVDEFDEFDRVEELDADAGDALGGDAGAREAGASAGRQVYPASPGGDPTAGR.

Over residues 119 to 141 (LAEVRRDARPAGDEDPYRRPRTV) the composition is skewed to basic and acidic residues. Residues 119-203 (LAEVRRDARP…SPGGDPTAGR (85 aa)) are disordered. Positions 142–169 (DEDDEDEDEDLVDEFDEFDRVEELDADA) are enriched in acidic residues.

Belongs to the RbfA family. As to quaternary structure, monomer. Binds 30S ribosomal subunits, but not 50S ribosomal subunits or 70S ribosomes.

The protein resides in the cytoplasm. Functionally, one of several proteins that assist in the late maturation steps of the functional core of the 30S ribosomal subunit. Associates with free 30S ribosomal subunits (but not with 30S subunits that are part of 70S ribosomes or polysomes). Required for efficient processing of 16S rRNA. May interact with the 5'-terminal helix region of 16S rRNA. The protein is Ribosome-binding factor A of Frankia alni (strain DSM 45986 / CECT 9034 / ACN14a).